The primary structure comprises 501 residues: Aspartate--tRNA ligase, cytoplasmic (501 aa).

A Phosphothreonine modification is found at Thr-52. Lys-74 carries the post-translational modification N6-acetyllysine. Position 229 (Glu-229) interacts with L-aspartate. Ser-249 carries the phosphoserine modification. The segment at 251–254 is aspartate; sequence QLYK. Arg-273 provides a ligand contact to L-aspartate. ATP is bound by residues 273–275 and 281–283; these read RAE and RHL. Lys-374 carries the post-translational modification N6-acetyllysine. The segment at 411-415 is binding site for the 3'-end of tRNA; the sequence is KQSNS. Glu-424 lines the ATP pocket. L-aspartate-binding residues include Ser-427 and Arg-431. 472–475 provides a ligand contact to ATP; that stretch reads GLER. Residue Thr-500 is modified to Phosphothreonine; by PKA.

This sequence belongs to the class-II aminoacyl-tRNA synthetase family. Type 2 subfamily. Homodimer. Part of a multisubunit complex that groups tRNA ligases for Arg (RARS1), Asp (DARS1), Gln (QARS1), Ile (IARS1), Leu (LARS1), Lys (KARS1), Met (MARS1) the bifunctional ligase for Glu and Pro (EPRS1) and the auxiliary subunits AIMP1/p43, AIMP2/p38 and EEF1E1/p18.

Its subcellular location is the cytoplasm. The catalysed reaction is tRNA(Asp) + L-aspartate + ATP = L-aspartyl-tRNA(Asp) + AMP + diphosphate. Its function is as follows. Catalyzes the specific attachment of an amino acid to its cognate tRNA in a 2 step reaction: the amino acid (AA) is first activated by ATP to form AA-AMP and then transferred to the acceptor end of the tRNA. The polypeptide is Aspartate--tRNA ligase, cytoplasmic (DARS1) (Bos taurus (Bovine)).